Consider the following 364-residue polypeptide: Anhydro-N-acetylmuramic acid kinase (364 aa).

An ATP-binding site is contributed by Gly11 to Asp18.

The protein belongs to the anhydro-N-acetylmuramic acid kinase family.

It catalyses the reaction 1,6-anhydro-N-acetyl-beta-muramate + ATP + H2O = N-acetyl-D-muramate 6-phosphate + ADP + H(+). It participates in amino-sugar metabolism; 1,6-anhydro-N-acetylmuramate degradation. Its pathway is cell wall biogenesis; peptidoglycan recycling. In terms of biological role, catalyzes the specific phosphorylation of 1,6-anhydro-N-acetylmuramic acid (anhMurNAc) with the simultaneous cleavage of the 1,6-anhydro ring, generating MurNAc-6-P. Is required for the utilization of anhMurNAc either imported from the medium or derived from its own cell wall murein, and thus plays a role in cell wall recycling. This chain is Anhydro-N-acetylmuramic acid kinase, found in Pseudomonas savastanoi pv. phaseolicola (strain 1448A / Race 6) (Pseudomonas syringae pv. phaseolicola (strain 1448A / Race 6)).